The chain runs to 191 residues: Potassium-transporting ATPase KdpC subunit (191 aa).

A helical membrane pass occupies residues 10 to 30 (ITLVFCVFFSVFYILVLWLFA).

This sequence belongs to the KdpC family. As to quaternary structure, the system is composed of three essential subunits: KdpA, KdpB and KdpC.

Its subcellular location is the cell inner membrane. Functionally, part of the high-affinity ATP-driven potassium transport (or Kdp) system, which catalyzes the hydrolysis of ATP coupled with the electrogenic transport of potassium into the cytoplasm. This subunit acts as a catalytic chaperone that increases the ATP-binding affinity of the ATP-hydrolyzing subunit KdpB by the formation of a transient KdpB/KdpC/ATP ternary complex. The protein is Potassium-transporting ATPase KdpC subunit of Bacteroides fragilis (strain ATCC 25285 / DSM 2151 / CCUG 4856 / JCM 11019 / LMG 10263 / NCTC 9343 / Onslow / VPI 2553 / EN-2).